Consider the following 253-residue polypeptide: Trypsin delta (253 aa).

Residues methionine 1–glycine 22 form the signal peptide. Positions leucine 23–arginine 30 are cleaved as a propeptide — activation peptide. Residues isoleucine 31–alanine 253 form the Peptidase S1 domain. Residues cysteine 56 and cysteine 72 are joined by a disulfide bond. Catalysis depends on charge relay system residues histidine 71 and aspartate 116. 2 cysteine pairs are disulfide-bonded: cysteine 180/cysteine 197 and cysteine 206/cysteine 230. Serine 210 serves as the catalytic Charge relay system.

Belongs to the peptidase S1 family.

Its subcellular location is the secreted. It is found in the extracellular space. The catalysed reaction is Preferential cleavage: Arg-|-Xaa, Lys-|-Xaa.. The chain is Trypsin delta from Drosophila erecta (Fruit fly).